The chain runs to 358 residues: Pyruvate dehydrogenase E1 component subunit alpha (358 aa).

As to quaternary structure, heterodimer of an alpha and a beta chain. Thiamine diphosphate is required as a cofactor.

It catalyses the reaction N(6)-[(R)-lipoyl]-L-lysyl-[protein] + pyruvate + H(+) = N(6)-[(R)-S(8)-acetyldihydrolipoyl]-L-lysyl-[protein] + CO2. The pyruvate dehydrogenase complex catalyzes the overall conversion of pyruvate to acetyl-CoA and CO(2). It contains multiple copies of three enzymatic components: pyruvate dehydrogenase (E1), dihydrolipoamide acetyltransferase (E2) and lipoamide dehydrogenase (E3). The protein is Pyruvate dehydrogenase E1 component subunit alpha (pdhA) of Mycoplasma pneumoniae (strain ATCC 29342 / M129 / Subtype 1) (Mycoplasmoides pneumoniae).